The primary structure comprises 119 residues: Large ribosomal subunit protein uL22c (119 aa).

The protein belongs to the universal ribosomal protein uL22 family. Part of the 50S ribosomal subunit.

It localises to the plastid. It is found in the chloroplast. Functionally, this protein binds specifically to 23S rRNA. In terms of biological role, the globular domain of the protein is located near the polypeptide exit tunnel on the outside of the subunit, while an extended beta-hairpin is found that lines the wall of the exit tunnel in the center of the 70S ribosome. The chain is Large ribosomal subunit protein uL22c (rpl22) from Angiopteris evecta (Mule's foot fern).